Here is a 325-residue protein sequence, read N- to C-terminus: MEIFDYDNILLLPRKCRVESRSECDTSVELGERRFRLPVVPANMKTVVDEKICTWLAQNGYFYVMHRFDLDNVQFVKDMHAQGCFASISLGVKQPDYDTVDRFVAEGICPEYITIDIAHGHADSVKNMITYLKAKIPAAFVIAGNVGTPEAVIDLENWGADATKVGIGPGKVCITKLKTGFGTGGWQLSALKWCARVATKPIIADGGIRSHGDIAKSVRFGATMVMVGSLFAGHEESPGKTVEVDGELYKEYYGSASDFNKGEYKHVEGKRILEPIKGKLADTLTEMEQDIQSSISYSGGKKLMDIRKVNYVILGGDNAGEHLLM.

Cys-173 functions as the Thioimidate intermediate in the catalytic mechanism. 202 to 225 provides a ligand contact to NADP(+); sequence IIADGGIRSHGDIAKSVRFGATMV.

It belongs to the IMPDH/GMPR family. GuaC type 2 subfamily.

It catalyses the reaction IMP + NH4(+) + NADP(+) = GMP + NADPH + 2 H(+). Catalyzes the irreversible NADPH-dependent deamination of GMP to IMP. It functions in the conversion of nucleobase, nucleoside and nucleotide derivatives of G to A nucleotides, and in maintaining the intracellular balance of A and G nucleotides. This Acidovorax sp. (strain JS42) protein is GMP reductase.